The primary structure comprises 457 residues: 3-ketoacyl-CoA thiolase 5, peroxisomal (457 aa).

A peroxisome-targeting transit peptide spans M1–C37. C137 serves as the catalytic Acyl-thioester intermediate. Catalysis depends on proton acceptor residues H394 and C426.

This sequence belongs to the thiolase-like superfamily. Thiolase family. In terms of assembly, homodimer. In terms of tissue distribution, expressed in seedlings and wounded leaves.

It is found in the peroxisome. It catalyses the reaction an acyl-CoA + acetyl-CoA = a 3-oxoacyl-CoA + CoA. It functions in the pathway lipid metabolism; fatty acid metabolism. Functionally, probably involved in long chain fatty-acid beta-oxidation prior to gluconeogenesis during germination and subsequent seedling growth. Involved in systemic jasmonic acid (JA) biosynthesis after wounding and may be during senescence. This Arabidopsis thaliana (Mouse-ear cress) protein is 3-ketoacyl-CoA thiolase 5, peroxisomal (KAT5).